The following is a 449-amino-acid chain: Tryptophan--tRNA ligase (449 aa).

ATP contacts are provided by residues 10 to 12 and 18 to 19; these read TTT and GN. A 'HIGH' region motif is present at residues 11–19; sequence TTGTPHLGN. Asp143 contacts L-tryptophan. Residues 155-157, Leu197, and 204-208 contribute to the ATP site; these read GRD and KMSKS. Residues 204–208 carry the 'KMSKS' region motif; sequence KMSKS.

Belongs to the class-I aminoacyl-tRNA synthetase family. Homodimer.

The protein resides in the cytoplasm. The enzyme catalyses tRNA(Trp) + L-tryptophan + ATP = L-tryptophyl-tRNA(Trp) + AMP + diphosphate + H(+). Catalyzes the attachment of tryptophan to tRNA(Trp). This is Tryptophan--tRNA ligase from Pseudomonas putida (strain ATCC 47054 / DSM 6125 / CFBP 8728 / NCIMB 11950 / KT2440).